The primary structure comprises 309 residues: Elongation factor Ts (309 aa).

Residues T82 to V85 are involved in Mg(2+) ion dislocation from EF-Tu.

The protein belongs to the EF-Ts family.

The protein localises to the cytoplasm. Its function is as follows. Associates with the EF-Tu.GDP complex and induces the exchange of GDP to GTP. It remains bound to the aminoacyl-tRNA.EF-Tu.GTP complex up to the GTP hydrolysis stage on the ribosome. This chain is Elongation factor Ts, found in Rickettsia peacockii (strain Rustic).